A 181-amino-acid polypeptide reads, in one-letter code: NADH-quinone oxidoreductase subunit I (181 aa).

2 4Fe-4S ferredoxin-type domains span residues 52–81 (TRDSAGHERCVACNLCAVSCPVGCISLKKS) and 91–120 (EFFRINFSRCIFCGMCEEACPTAAIQLISD). Residues C61, C64, C67, C71, C100, C103, C106, and C110 each contribute to the [4Fe-4S] cluster site.

Belongs to the complex I 23 kDa subunit family. In terms of assembly, NDH-1 is composed of 13 different subunits. Subunits NuoA, H, J, K, L, M, N constitute the membrane sector of the complex. Requires [4Fe-4S] cluster as cofactor.

Its subcellular location is the cell inner membrane. It carries out the reaction a quinone + NADH + 5 H(+)(in) = a quinol + NAD(+) + 4 H(+)(out). Functionally, NDH-1 shuttles electrons from NADH, via FMN and iron-sulfur (Fe-S) centers, to quinones in the respiratory chain. The immediate electron acceptor for the enzyme in this species is believed to be ubiquinone. Couples the redox reaction to proton translocation (for every two electrons transferred, four hydrogen ions are translocated across the cytoplasmic membrane), and thus conserves the redox energy in a proton gradient. This is NADH-quinone oxidoreductase subunit I from Blochmanniella floridana.